The sequence spans 445 residues: Homoserine dehydrogenase (445 aa).

Positions 26, 28, and 29 each coordinate NADPH. NAD(+)-binding residues include Val29 and Ala58. Val29 is an NADP(+) binding site. Position 119 (Lys119) interacts with NADPH. Residue Lys119 coordinates NADP(+). Residues Glu143, Val146, Gly148, and Ile150 each contribute to the Na(+) site. NADP(+)-binding residues include Gly201 and Glu204. 2 residues coordinate L-homoserine: Glu204 and Asp215. Lys219 serves as the catalytic Proton donor. Gly321 contacts NADPH. Gly321 contacts NAD(+). Gly321 provides a ligand contact to NADP(+). An ACT domain is found at 368–445 (HLDMDVEDRV…INSVIRLERD (78 aa)).

This sequence belongs to the homoserine dehydrogenase family. A metal cation serves as cofactor.

The catalysed reaction is L-homoserine + NADP(+) = L-aspartate 4-semialdehyde + NADPH + H(+). It carries out the reaction L-homoserine + NAD(+) = L-aspartate 4-semialdehyde + NADH + H(+). It functions in the pathway amino-acid biosynthesis; L-methionine biosynthesis via de novo pathway; L-homoserine from L-aspartate: step 3/3. The protein operates within amino-acid biosynthesis; L-threonine biosynthesis; L-threonine from L-aspartate: step 3/5. Feedback inhibition by threonine. In terms of biological role, catalyzes the conversion of L-aspartate-beta-semialdehyde (L-Asa) to L-homoserine (L-Hse), the third step in the biosynthesis of threonine and methionine from aspartate. This Corynebacterium glutamicum (strain ATCC 13032 / DSM 20300 / JCM 1318 / BCRC 11384 / CCUG 27702 / LMG 3730 / NBRC 12168 / NCIMB 10025 / NRRL B-2784 / 534) protein is Homoserine dehydrogenase (hom).